The chain runs to 100 residues: Small ribosomal subunit protein uS14c (100 aa).

The protein belongs to the universal ribosomal protein uS14 family. Part of the 30S ribosomal subunit.

It localises to the plastid. It is found in the chloroplast. Its function is as follows. Binds 16S rRNA, required for the assembly of 30S particles. The protein is Small ribosomal subunit protein uS14c of Oedogonium cardiacum (Filamentous green alga).